A 335-amino-acid polypeptide reads, in one-letter code: Non-structural protein P9-1 (335 aa).

Positions 27-42 (FNANTKNQNQNTSNTQ) are enriched in low complexity. Residues 27–48 (FNANTKNQNQNTSNTQSSGGIT) form a disordered region.

The polypeptide is Non-structural protein P9-1 (S9) (Fiji disease virus (isolate Sugarcane) (FDV)).